Here is a 360-residue protein sequence, read N- to C-terminus: Phospho-N-acetylmuramoyl-pentapeptide-transferase (360 aa).

10 consecutive transmembrane segments (helical) span residues 3–23 (SILVGAAVALVVSILFTPYLI), 52–72 (MGGVAILVAMWAGYLVAHLTV), 81–101 (GLLVLGLTTALGIVGFLDDFI), 115–135 (AKLVGQLVASVLFAVLAMQFA), 153–173 (ITVISFGSVGFVIFAYIAISG), 187–207 (LAGGTAAMVLAIYVVISFWQF), 230–250 (IALVAGAAMAACVGFLWWNAA), 254–274 (IFMGDTGSLALGGLLAGLSMV), 282–302 (IIIGGLFVVEALSVVMQIVVF), and 333–353 (FWVLAAISAMFGLGLFYADWL).

It belongs to the glycosyltransferase 4 family. MraY subfamily. The cofactor is Mg(2+).

The protein resides in the cell membrane. It catalyses the reaction UDP-N-acetyl-alpha-D-muramoyl-L-alanyl-gamma-D-glutamyl-meso-2,6-diaminopimeloyl-D-alanyl-D-alanine + di-trans,octa-cis-undecaprenyl phosphate = di-trans,octa-cis-undecaprenyl diphospho-N-acetyl-alpha-D-muramoyl-L-alanyl-D-glutamyl-meso-2,6-diaminopimeloyl-D-alanyl-D-alanine + UMP. It participates in cell wall biogenesis; peptidoglycan biosynthesis. Its function is as follows. Catalyzes the initial step of the lipid cycle reactions in the biosynthesis of the cell wall peptidoglycan: transfers peptidoglycan precursor phospho-MurNAc-pentapeptide from UDP-MurNAc-pentapeptide onto the lipid carrier undecaprenyl phosphate, yielding undecaprenyl-pyrophosphoryl-MurNAc-pentapeptide, known as lipid I. The polypeptide is Phospho-N-acetylmuramoyl-pentapeptide-transferase (Saccharopolyspora erythraea (strain ATCC 11635 / DSM 40517 / JCM 4748 / NBRC 13426 / NCIMB 8594 / NRRL 2338)).